A 471-amino-acid polypeptide reads, in one-letter code: Exoglucanase 2 (471 aa).

Positions 1–18 (MIVGILTTLATLATLAAS) are cleaved as a signal peptide. A propeptide spanning residues 19 to 24 (VPLEER) is cleaved from the precursor. Glutamine 25 is subject to Pyrrolidone carboxylic acid. A CBM1 domain is found at 26–62 (ACSSVWGQCGGQNWSGPTCCASGSTCVYSNDYYSQCL). The segment covering 64–101 (GAASSSSSTRAASTTSRVSPTTSRSSSATPPPGSTTTR) has biased composition (low complexity). The disordered stretch occupies residues 64–108 (GAASSSSSTRAASTTSRVSPTTSRSSSATPPPGSTTTRVPPVGSG). Residues 66 to 106 (ASSSSSTRAASTTSRVSPTTSRSSSATPPPGSTTTRVPPVG) are linker. A catalytic region spans residues 107–471 (SGTATYSGNP…LLTNANPSFL (365 aa)). O-linked (Man...) threonine glycosylation is found at threonine 111 and threonine 121. Residues serine 130, serine 133, serine 134, and serine 139 are each glycosylated (O-linked (Man...) serine). Threonine 146 is a glycosylation site (O-linked (Man...) threonine). Cysteine 200 and cysteine 259 are disulfide-bonded. Aspartate 245 functions as the Proton donor in the catalytic mechanism. N-linked (GlcNAc) asparagine glycosylation is present at asparagine 313. Asparagine 334 carries an N-linked (GlcNAc...) (high mannose) asparagine glycan. An intrachain disulfide couples cysteine 392 to cysteine 439.

The protein belongs to the glycosyl hydrolase 6 (cellulase B) family. Asn-334 contains mainly a high-mannose-type glycan (Hex(7-9)GlcNAc(2)) in a 3:1 ration with a single GlcNAc. Asn-313 was primarily unglycosylated with a small fraction (18%) bearing a single GlcNAc at this site.

The protein localises to the secreted. The catalysed reaction is Hydrolysis of (1-&gt;4)-beta-D-glucosidic linkages in cellulose and cellotetraose, releasing cellobiose from the non-reducing ends of the chains.. In terms of biological role, exocellobiohydrolases (CBH) that catalyzes the hydrolysis of 1,4-beta-D-glucosidic bonds in cellulose to release the disaccharide cellobiose. The degradation of cellulose involves an interplay between different cellulolytic enzymes. Hydrolysis starts with endoglucanases (EGs), which cut internal beta-1,4-glucosidic bonds in cellulose to reduce the polymerization degree of the substrate and create new chain ends for exocellobiohydrolases (CBHs). The CBHs release the disaccharide cellobiose from the non-reducing end of the cellulose polymer chain. Finally, beta-1,4-glucosidases hydrolyze the cellobiose and other short cello-oligosaccharides into glucose units. This chain is Exoglucanase 2 (cbh2), found in Hypocrea jecorina (Trichoderma reesei).